The chain runs to 124 residues: Glycine cleavage system H protein (124 aa).

The Lipoyl-binding domain maps to 22–104; it reads LIVTGISDHA…YGKGWIYKMK (83 aa). K63 is subject to N6-lipoyllysine.

This sequence belongs to the GcvH family. In terms of assembly, the glycine cleavage system is composed of four proteins: P, T, L and H. The cofactor is (R)-lipoate.

Its function is as follows. The glycine cleavage system catalyzes the degradation of glycine. The H protein shuttles the methylamine group of glycine from the P protein to the T protein. This Acinetobacter baylyi (strain ATCC 33305 / BD413 / ADP1) protein is Glycine cleavage system H protein.